The sequence spans 274 residues: Dermonecrotic toxin SdSicTox-betaIIB1bvii (274 aa).

His-5 is an active-site residue. Mg(2+)-binding residues include Glu-25 and Asp-27. Catalysis depends on His-41, which acts as the Nucleophile. 2 disulfide bridges follow: Cys-45/Cys-51 and Cys-47/Cys-190. Asp-85 lines the Mg(2+) pocket.

This sequence belongs to the arthropod phospholipase D family. Class II subfamily. Mg(2+) is required as a cofactor. Expressed by the venom gland.

The protein resides in the secreted. The enzyme catalyses an N-(acyl)-sphingosylphosphocholine = an N-(acyl)-sphingosyl-1,3-cyclic phosphate + choline. It catalyses the reaction an N-(acyl)-sphingosylphosphoethanolamine = an N-(acyl)-sphingosyl-1,3-cyclic phosphate + ethanolamine. It carries out the reaction a 1-acyl-sn-glycero-3-phosphocholine = a 1-acyl-sn-glycero-2,3-cyclic phosphate + choline. The catalysed reaction is a 1-acyl-sn-glycero-3-phosphoethanolamine = a 1-acyl-sn-glycero-2,3-cyclic phosphate + ethanolamine. In terms of biological role, dermonecrotic toxins cleave the phosphodiester linkage between the phosphate and headgroup of certain phospholipids (sphingolipid and lysolipid substrates), forming an alcohol (often choline) and a cyclic phosphate. This toxin acts on sphingomyelin (SM). It may also act on ceramide phosphoethanolamine (CPE), lysophosphatidylcholine (LPC) and lysophosphatidylethanolamine (LPE), but not on lysophosphatidylserine (LPS), and lysophosphatidylglycerol (LPG). It acts by transphosphatidylation, releasing exclusively cyclic phosphate products as second products. Induces dermonecrosis, hemolysis, increased vascular permeability, edema, inflammatory response, and platelet aggregation. This Sicarius cf. damarensis (strain GJB-2008) (Six-eyed sand spider) protein is Dermonecrotic toxin SdSicTox-betaIIB1bvii.